A 101-amino-acid polypeptide reads, in one-letter code: Protein RnfH (101 aa).

The protein belongs to the UPF0125 (RnfH) family.

The protein is Protein RnfH of Pseudomonas aeruginosa (strain UCBPP-PA14).